The primary structure comprises 473 residues: Glutamine synthetase (473 aa).

Residues 18-102 form the GS beta-grasp domain; it reads NNIKWVDLQF…VLTKVFWGGG (85 aa). In terms of domain architecture, GS catalytic spans 110-473; sequence PRGIAEEAEK…PMEIYQYLDS (364 aa). Mg(2+) is bound by residues Glu-133 and Glu-135. Glu-207 serves as a coordination point for ATP. Mg(2+) contacts are provided by Glu-212 and Glu-220. L-glutamate contacts are provided by residues 264–265 and Gly-265; that span reads NG. His-269 lines the Mg(2+) pocket. ATP-binding positions include 271–273 and Ser-273; that span reads HFS. Residues Arg-324, Glu-330, and Arg-342 each contribute to the L-glutamate site. Arg-342, Arg-347, and Lys-357 together coordinate ATP. Glu-362 is a binding site for Mg(2+). Arg-364 is a binding site for L-glutamate.

This sequence belongs to the glutamine synthetase family. Oligomer of 12 subunits arranged in the form of two hexagons. Mg(2+) serves as cofactor. The cofactor is Mn(2+).

Its subcellular location is the cytoplasm. The enzyme catalyses L-glutamate + NH4(+) + ATP = L-glutamine + ADP + phosphate + H(+). With respect to regulation, strongly inhibited by glycine and L-alanine. AMP at 10 mM displays a very weak inhibitory effect. The activity of this enzyme is not controlled by adenylation. In terms of biological role, probably involved in nitrogen metabolism via ammonium assimilation. Catalyzes the ATP-dependent biosynthesis of glutamine from glutamate and ammonia. The polypeptide is Glutamine synthetase (Sulfolobus acidocaldarius (strain ATCC 33909 / DSM 639 / JCM 8929 / NBRC 15157 / NCIMB 11770)).